The following is a 165-amino-acid chain: uncharacterized protein (165 aa).

The protein belongs to the IIV-6 415R family.

This is an uncharacterized protein from Invertebrate iridescent virus 3 (IIV-3).